A 139-amino-acid polypeptide reads, in one-letter code: Protein cornichon homolog 4 (139 aa).

3 helical membrane passes run Val5–Ile25, Ile57–Val77, and Leu118–Asn138.

This sequence belongs to the cornichon family. In terms of assembly, interacts with Sec23/24 complex components SEC24B and SEC24D. Interacts with CCR5. Interacts with ADRB2 in the early secretory pathway.

It localises to the membrane. It is found in the endoplasmic reticulum. The protein resides in the endoplasmic reticulum-Golgi intermediate compartment. Functionally, involved in G protein-coupled receptors (GPCRs) trafficking from the endoplasmic reticulum to the cell surface; it promotes the exit of GPCRs from the early secretory pathway, likely through interaction with the COPII machinery. This chain is Protein cornichon homolog 4 (CNIH4), found in Homo sapiens (Human).